A 312-amino-acid polypeptide reads, in one-letter code: Dehydrin CAS31 (312 aa).

Disordered regions lie at residues 1–88 (MSQY…HTGG) and 248–287 (GTEQ…HHGE). Residues 21 to 30 (PLTSQGQVDQ) are compositionally biased toward polar residues. Positions 35 to 46 (ISGGGMTGATGH) are enriched in gly residues. Low complexity predominate over residues 55 to 66 (HGVGVDQTTGFG). Gly residues-rich tracts occupy residues 67–88 (SNTG…HTGG) and 256–278 (TGTG…GTTG).

This sequence belongs to the plant dehydrin family. In terms of assembly, interacts with the leghemoglobin LB120-1 in the cytoplasm; this interaction leads to LB120-1 protection from denaturation under thermal and drought stresses. Expressed in nodules and roots.

The protein localises to the cytoplasm. Functionally, intrinsically disordered protein acting as a chaperone. Ensures leghemoglobins (e.g. LB120-1) protection from denaturation under thermal and drought stresses to delay root nodule nitrogenase inactivation and subsequent nodule senescence, thus supporting symbiotic nitrogen fixation (SNF). The chain is Dehydrin CAS31 from Medicago truncatula (Barrel medic).